A 554-amino-acid polypeptide reads, in one-letter code: Trichloroethene reductive dehalogenase (554 aa).

A signal peptide (tat-type signal) is located at residues 1–42; sequence MSEKYHSTVTRRDFMKRLGLAGAGAGALGAAVLAENNLPHEF. 4Fe-4S ferredoxin-type domains are found at residues 425–457 and 471–500; these read PTKP…HEGP and EGWH…NNSW. 8 residues coordinate [4Fe-4S] cluster: C437, C440, C443, C447, C480, C483, C486, and C490.

This sequence belongs to the PceA family. [4Fe-4S] cluster is required as a cofactor. It depends on corrinoid as a cofactor. In terms of processing, predicted to be exported by the Tat system. The position of the signal peptide cleavage has been experimentally proven.

Its subcellular location is the cell membrane. It carries out the reaction trichloroethene + AH2 = (Z)-1,2-dichloroethene + chloride + A + H(+). The enzyme catalyses (Z)-1,2-dichloroethene + AH2 = chloroethene + chloride + A + H(+). It catalyses the reaction 1,1-dichloroethene + AH2 = chloroethene + chloride + A + H(+). Its activity is regulated as follows. Loses 93% of its activity upon incubation with 1-iodopropane and titanium(III) citrate in the dark. Subsequent exposure to light restores 80% of the original activity. Completely inhibited by 2 mM sodium sulfite or sodium dithionite, and by 1 mM cuprous chloride. Catalyzes the reductive dechlorination of trichloroethene (TCE) to cis-1,2-dichloroethene (DCE) and of cis-1,2-dichloroethene to chloroethene. The substrate specificity is broad, and the enzyme can dehalogenate various substrates, including 1,1-dichloroethene (1,1-DCE), 1,2-dichloroethane and 1,2-dibromoethane. A variety of other haloalkanes and haloalkenes containing three to five carbon atoms are dehalogenated at lower rates. Trans-1,2-dichloroethene (trans-DCE) and chloroethene are degraded at rates which are approximately 2 orders of magnitude lower. Titanium(III) citrate and methyl viologen can be used as reductants. The polypeptide is Trichloroethene reductive dehalogenase (Dehalococcoides mccartyi (strain ATCC BAA-2266 / KCTC 15142 / 195) (Dehalococcoides ethenogenes (strain 195))).